The following is a 425-amino-acid chain: Serine--tRNA ligase (425 aa).

An L-serine-binding site is contributed by 233 to 235 (TAE). 264-266 (RAE) lines the ATP pocket. E287 contacts L-serine. ATP is bound at residue 351-354 (EISS). S387 serves as a coordination point for L-serine.

The protein belongs to the class-II aminoacyl-tRNA synthetase family. Type-1 seryl-tRNA synthetase subfamily. In terms of assembly, homodimer. The tRNA molecule binds across the dimer.

It localises to the cytoplasm. The catalysed reaction is tRNA(Ser) + L-serine + ATP = L-seryl-tRNA(Ser) + AMP + diphosphate + H(+). It carries out the reaction tRNA(Sec) + L-serine + ATP = L-seryl-tRNA(Sec) + AMP + diphosphate + H(+). It participates in aminoacyl-tRNA biosynthesis; selenocysteinyl-tRNA(Sec) biosynthesis; L-seryl-tRNA(Sec) from L-serine and tRNA(Sec): step 1/1. Its function is as follows. Catalyzes the attachment of serine to tRNA(Ser). Is also able to aminoacylate tRNA(Sec) with serine, to form the misacylated tRNA L-seryl-tRNA(Sec), which will be further converted into selenocysteinyl-tRNA(Sec). The protein is Serine--tRNA ligase of Clostridium botulinum (strain Alaska E43 / Type E3).